Reading from the N-terminus, the 825-residue chain is Actin filament-associated protein 1-like 2 (825 aa).

Tyr-56 is subject to Phosphotyrosine. The interval 62 to 163 (VNGEQNSASP…SKGKAAPYQW (102 aa)) is disordered. Positions 80–94 (PLTNGEPSQHSSAPQ) are enriched in polar residues. Residue Thr-113 is modified to Phosphothreonine. PH domains are found at residues 175-271 (DARI…EVSG) and 353-447 (SLET…SESG). Residue Ser-408 is modified to Phosphoserine. The residue at position 413 (Tyr-413) is a Phosphotyrosine. Ser-484 is modified (phosphoserine). A disordered region spans residues 571–614 (TLTVDPKPGTTPEEPHTESPGDPEVQQRQPEVQESSEPIEPTPR). Over residues 593-608 (PEVQQRQPEVQESSEP) the composition is skewed to low complexity. Positions 657–754 (AEIKLGKNRT…VKDNLKKAEA (98 aa)) form a coiled coil. The segment at 757 to 801 (VTLGTTVDTTHLDNMSPRPQPKAATPNPPPDSTPVNSASVLKNRP) is disordered. Polar residues predominate over residues 759 to 769 (LGTTVDTTHLD).

As to quaternary structure, interacts with SRC. Interacts with LCK when tyrosine phosphorylated. In terms of processing, tyrosine phosphorylated (by SRC).

It is found in the cytoplasm. In terms of biological role, may play a role in a signaling cascade by enhancing the kinase activity of SRC. Contributes to SRC-regulated transcription activation. In Mus musculus (Mouse), this protein is Actin filament-associated protein 1-like 2 (Afap1l2).